Consider the following 1379-residue polypeptide: Partitioning defective protein 3 (1379 aa).

Over residues 1 to 23 the composition is skewed to low complexity; it reads MSASSTSSSSTSCPEGGEPSGSC. Disordered stretches follow at residues 1–32 and 208–335; these read MSAS…GEST and YNVG…SDRK. Composition is skewed to polar residues over residues 239–256 and 272–284; these read SFDQ…PKPS and ILRS…ASGS. 2 stretches are compositionally biased toward basic and acidic residues: residues 302 to 315 and 322 to 335; these read EVEK…ERKS and DKNP…SDRK. PDZ domains lie at 381-483 and 515-599; these read LVTF…IINR and VVEL…SRVS. Positions 606–626 form a coiled coil; it reads TSASSENKENEETLKVVEEEK. The PDZ 3 domain occupies 659–750; the sequence is VIPFINGSSS…EVGMISSNVR (92 aa). Disordered stretches follow at residues 767 to 873, 887 to 918, 949 to 1085, 1273 to 1301, and 1350 to 1379; these read DLSR…MGAA, HQRQ…RSPM, QSME…GGNV, VEPV…SGSS, and AYET…FPQY. 2 stretches are compositionally biased toward low complexity: residues 776 to 786 and 798 to 826; these read SSPSPSSRMSS and ATRG…AVPA. Basic and acidic residues-rich tracts occupy residues 828-844 and 854-869; these read LTER…RNDE and FNRE…EKRG. Residues 894–912 are compositionally biased toward low complexity; sequence PTSSTQKRSKSQPRSSSQR. Residues 967 to 977 show a composition bias toward polar residues; it reads QIPTGSSSKVQ. 2 stretches are compositionally biased toward basic and acidic residues: residues 1030–1040 and 1048–1060; these read KSRDASPEKTP and SVER…DERN. Residues 1290-1301 show a composition bias toward low complexity; it reads STSSGAVASGSS.

Belongs to the PAR3 family. As to quaternary structure, required, together with pkc-3, for the localization of par-6; par-6 is involved in localizing/maintaining par-3 at the cell periphery. Interacts with par-6 and pkc-3 for localization at the periphery of anterior cortex of the embryo. As to expression, asymmetrically distributed at the periphery of the zygote and in dividing blastomeres of the germline lineage. Coexpressed with par-6; patchy expression observed at the periphery after completion of meiosis I and in meiosis II. On completion of metaphase II, expression is restricted to the anterior 85% of embryo length; this decreases to 55% in embryos between prophase and telophase of the first mitosis. During the first cleavage, expression is detected in the advancing furrow. Transiently coexpressed and colocalized asymmetrically with par-6 and pkc-3, in the developing somatic gonad, including the spermathecal precursor cells of L4 larvae.

The protein resides in the cytoplasm. Its function is as follows. In cooperation with pkc-3, required for establishing cell polarity and regulating spindle orientation in the early embryo. Localization is crucial for recruiting par-6 and pkc-3 to the peripheral apical cortex and restricting par-2 to basolateral surfaces. Necessary for apicobasal and anterior-posterior asymmetries associated with cell adhesion and gastrulation during the first few cycles of embryogenesis, and also for epithelial cell polarity in the distal spermatheca. Regulates the asymmetric localization of csnk-1, ppk-1 and gpr-1/2 during the first embryonic division. The chain is Partitioning defective protein 3 from Caenorhabditis elegans.